Reading from the N-terminus, the 994-residue chain is Tyrosine-protein kinase Mer (994 aa).

A signal peptide spans M1–S18. The Extracellular segment spans residues G19–M497. Residues V44 to T78 are disordered. Ig-like C2-type domains are found at residues P75 to S181 and P192 to S268. N-linked (GlcNAc...) asparagine glycosylation is found at N91, N108, N165, N202, N210, N229, N289, N311, N324, N331, N349, N384, N390, N437, and N449. A disulfide bridge connects residues C109 and C170. C213 and C257 form a disulfide bridge. 2 consecutive Fibronectin type-III domains span residues P281–G376 and A381–H478. The chain crosses the membrane as a helical span at residues F498 to L518. Over A519–M994 the chain is Cytoplasmic. S538 is subject to Phosphoserine. Residues L582–L852 form the Protein kinase domain. Residues L588–V596 and K610 each bind ATP. Catalysis depends on D718, which acts as the Proton acceptor. Phosphotyrosine; by autocatalysis occurs at positions 744, 748, 749, and 867.

Belongs to the protein kinase superfamily. Tyr protein kinase family. AXL/UFO subfamily. Interacts (upon activation) with TNK2; stimulates TNK2 autophosphorylation. Interacts (via N-terminus) with extracellular ligands LGALS3, TUB, TULP1 and GAS6. Interacts with VAV1 in a phosphotyrosine-independent manner. Interacts with TIMD4; this interaction enhances TIMD4-mediated efferocytosis. Post-translationally, autophosphorylated on Tyr-744, Tyr-748 and Tyr-749 in the activation loop allowing full activity. Autophosphorylated on Tyr-867 leading to recruitment of downstream partners of the signaling cascade such as PLCG2. Expressed predominantly in the hematopoietic lineages: macrophages, NK cells, NKT cells, dendritic cells and platelets.

The protein localises to the cell membrane. It carries out the reaction L-tyrosyl-[protein] + ATP = O-phospho-L-tyrosyl-[protein] + ADP + H(+). Functionally, receptor tyrosine kinase that transduces signals from the extracellular matrix into the cytoplasm by binding to several ligands including LGALS3, TUB, TULP1 or GAS6. Regulates many physiological processes including cell survival, migration, differentiation, and phagocytosis of apoptotic cells (efferocytosis). Ligand binding at the cell surface induces autophosphorylation of MERTK on its intracellular domain that provides docking sites for downstream signaling molecules. Following activation by ligand, interacts with GRB2 or PLCG2 and induces phosphorylation of MAPK1, MAPK2, FAK/PTK2 or RAC1. MERTK signaling plays a role in various processes such as macrophage clearance of apoptotic cells, platelet aggregation, cytoskeleton reorganization and engulfment. Functions in the retinal pigment epithelium (RPE) as a regulator of rod outer segments fragments phagocytosis. Also plays an important role in inhibition of Toll-like receptors (TLRs)-mediated innate immune response by activating STAT1, which selectively induces production of suppressors of cytokine signaling SOCS1 and SOCS3. This Mus musculus (Mouse) protein is Tyrosine-protein kinase Mer (Mertk).